The chain runs to 1420 residues: Apolipoprotein(a) (1420 aa).

Residues 19–30 show a composition bias toward low complexity; it reads TAVAPPNVTPVP. A disordered region spans residues 19–46; that stretch reads TAVAPPNVTPVPSLEAPSEQAPTEQRPG. Kringle domains follow at residues 49 to 127, 163 to 241, 277 to 355, 391 to 469, and 505 to 583; these read ECYH…LTQC, ECYH…LTRC, and ECYY…LTQC. Cystine bridges form between Cys-50–Cys-127, Cys-71–Cys-110, Cys-99–Cys-122, Cys-164–Cys-241, Cys-185–Cys-224, Cys-213–Cys-236, Cys-278–Cys-355, Cys-299–Cys-338, Cys-327–Cys-350, Cys-392–Cys-469, Cys-413–Cys-452, Cys-441–Cys-464, Cys-506–Cys-583, Cys-527–Cys-566, and Cys-555–Cys-578. Residues 598-617 form a disordered region; it reads PDPSTQASSEEAPTEQSPEV. The span at 600–616 shows a compositional bias: polar residues; that stretch reads PSTQASSEEAPTEQSPE. 5 consecutive Kringle domains span residues 619–697, 725–803, 839–917, 953–1031, and 1067–1145; these read DCYH…LTQC, DCYQ…LTQC, and QCYH…LTRC. Disulfide bonds link Cys-620-Cys-697, Cys-641-Cys-680, Cys-669-Cys-692, Cys-726-Cys-803, Cys-747-Cys-786, Cys-775-Cys-798, Cys-840-Cys-917, Cys-861-Cys-900, Cys-889-Cys-912, Cys-954-Cys-1031, Cys-975-Cys-1014, Cys-1003-Cys-1026, Cys-1068-Cys-1145, Cys-1089-Cys-1128, Cys-1117-Cys-1140, Cys-1217-Cys-1233, Cys-1309-Cys-1376, Cys-1339-Cys-1355, and Cys-1366-Cys-1394. One can recognise a Peptidase S1 domain in the interval 1191-1418; sequence IVGGCVAHPH…FVTWIEGVMR (228 aa).

Belongs to the peptidase S1 family. Plasminogen subfamily. In terms of assembly, disulfide-linked to apo-B100. Binds to fibronectin and decorin. Post-translationally, N- and O-glycosylated.

Apo(a) is the main constituent of lipoprotein(a) (Lp(a)). It has serine proteinase activity and is able of autoproteolysis. Inhibits tissue-type plasminogen activator 1. Lp(a) may be a ligand for megalin/Gp 330. This is Apolipoprotein(a) (LPA) from Macaca mulatta (Rhesus macaque).